A 492-amino-acid chain; its full sequence is Solute carrier family 2, facilitated glucose transporter member 1 (492 aa).

At Met-1 the chain carries N-acetylmethionine. Residues 1–11 (MEPSSKKVTGR) lie on the Cytoplasmic side of the membrane. The chain crosses the membrane as a helical span at residues 12 to 33 (LMLAVGGAVLGSLQFGYNTGVI). Residues 34–66 (NAPQKVIEEFYNQTWIHRYGERILPTTLTTLWS) lie on the Extracellular side of the membrane. A glycan (N-linked (GlcNAc...) asparagine) is linked at Asn-45. The chain crosses the membrane as a helical span at residues 67–87 (LSVAIFSVGGMIGSFSVGLFV). Topologically, residues 88 to 90 (NRF) are cytoplasmic. Residues 91–112 (GRRNSMLMMNLLAFVSAVLMGF) form a helical membrane-spanning segment. Residues 113–120 (SKLAKSFE) are Extracellular-facing. A helical transmembrane segment spans residues 121–144 (MLILGRFIIGVYCGLTTGFVPMYV). Topologically, residues 145–155 (GEVSPTALRGA) are cytoplasmic. A helical transmembrane segment spans residues 156 to 176 (LGTLHQLGIVVGILIAQVFGL). A D-glucose-binding site is contributed by Gln-161. Topologically, residues 177–185 (DSIMGNEDL) are extracellular. A helical transmembrane segment spans residues 186–206 (WPLLLSVIFVPALLQCIVLPL). The Cytoplasmic segment spans residues 207–271 (CPESPRFLLI…LFRSPAYRQP (65 aa)). Ser-226 carries the post-translational modification Phosphoserine. Residues 272 to 293 (ILSAVVLQLSQQLSGINAVFYY) form a helical membrane-spanning segment. D-glucose is bound by residues 282–283 (QQ) and Asn-288. Topologically, residues 294–306 (STSIFEKAGVQQP) are extracellular. Residues 307-328 (VYATIGSGIVNTAFTVVSLFVV) traverse the membrane as a helical segment. Asn-317 contacts D-glucose. The Cytoplasmic segment spans residues 329–334 (ERAGRR). The helical transmembrane segment at 335–355 (TLHLIGLAGMAACAVLMTIAL) threads the bilayer. Over 356-365 (ALLEQLPWMS) the chain is Extracellular. The chain crosses the membrane as a helical span at residues 366–388 (YLSIVAIFGFVAFFEVGPGPIPW). Positions 380 and 388 each coordinate D-glucose. At 389-401 (FIVAELFSQGPRP) the chain is on the cytoplasmic side. The helical transmembrane segment at 402–422 (AAVAVAGFSNWTSNFIVGMCF) threads the bilayer. The Extracellular segment spans residues 423-429 (QYVEQLC). Residues 430–450 (GPYVFIIFTVLLVLFFIFTYF) form a helical membrane-spanning segment. Residues 451 to 492 (KVPETKGRTFDEIASGFRQGGASQSDKTPEELFHPLGADSQV) lie on the Cytoplasmic side of the membrane. At Ser-465 the chain carries Phosphoserine. The tract at residues 468–492 (RQGGASQSDKTPEELFHPLGADSQV) is disordered. Thr-478 carries the post-translational modification Phosphothreonine. Ser-490 is modified (phosphoserine).

The protein belongs to the major facilitator superfamily. Sugar transporter (TC 2.A.1.1) family. Glucose transporter subfamily. Found in a complex with ADD2, DMTN and SLC2A1. Interacts (via C-terminus cytoplasmic region) with DMTN. Interacts with SNX27; the interaction is required when endocytosed to prevent degradation in lysosomes and promote recycling to the plasma membrane. Interacts with GIPC (via PDZ domain). Interacts with STOM. Interacts with SGTA (via Gln-rich region). Interacts with BSG. Interacts with SMIM43; the interaction may promote SLC2A1-mediated glucose transport to meet the energy needs of mesendoderm differentiation. In terms of processing, phosphorylation at Ser-226 by PKC promotes glucose uptake by increasing cell membrane localization.

The protein localises to the cell membrane. It localises to the photoreceptor inner segment. It carries out the reaction D-glucose(out) = D-glucose(in). The uptake of glucose is inhibited by cytochalasin B. Glucose uptake is increased in response to phorbol ester 12-O-tetradecanoylphorbol-13-acetate (TPA) treatment: TPA-induced glucose uptake requires phosphorylation at Ser-226. In terms of biological role, facilitative glucose transporter, which is responsible for constitutive or basal glucose uptake. Has a very broad substrate specificity; can transport a wide range of aldoses including both pentoses and hexoses. Most important energy carrier of the brain: present at the blood-brain barrier and assures the energy-independent, facilitative transport of glucose into the brain. In association with BSG and NXNL1, promotes retinal cone survival by increasing glucose uptake into photoreceptors. Required for mesendoderm differentiation. This Oryctolagus cuniculus (Rabbit) protein is Solute carrier family 2, facilitated glucose transporter member 1.